Reading from the N-terminus, the 190-residue chain is Putative manganese efflux pump MntP (190 aa).

Transmembrane regions (helical) follow at residues 37-57 (LILA…GWGI), 64-84 (LSFI…GVGA), 111-131 (LILG…MAFV), 135-155 (IITL…VGAW), and 164-184 (FGGW…GNIL).

Belongs to the MntP (TC 9.B.29) family.

The protein resides in the cell membrane. Functionally, probably functions as a manganese efflux pump. The chain is Putative manganese efflux pump MntP from Corynebacterium efficiens (strain DSM 44549 / YS-314 / AJ 12310 / JCM 11189 / NBRC 100395).